A 229-amino-acid polypeptide reads, in one-letter code: MKLVLIRHGQSEWNKLNLFTGWHDVDLSQEGVVEAMTAGKRIKEAGLEFDVAFTSVLTRAIKTLNYVLEESDQMWVPVHKSWRLNERHYGALQGLNKQETAEKYGADQVQKWRRSYDTLPPLLEENDERQAKNDRRYQLLDTHAIPSGENLKVTLERVIPYWMDTIAPEIKEGRRVVIAAHGNSLRALVKFLEGISDDEIMDLEIPTGVPLVYELNADLKPVNKYYLDK.

Substrate-binding positions include 7–14 (RHGQSEWN), 20–21 (TG), Arg59, 86–89 (ERHY), Lys97, 113–114 (RR), and 182–183 (GN). The active-site Tele-phosphohistidine intermediate is the His8. Glu86 serves as the catalytic Proton donor/acceptor.

The protein belongs to the phosphoglycerate mutase family. BPG-dependent PGAM subfamily.

It catalyses the reaction (2R)-2-phosphoglycerate = (2R)-3-phosphoglycerate. The protein operates within carbohydrate degradation; glycolysis; pyruvate from D-glyceraldehyde 3-phosphate: step 3/5. Functionally, catalyzes the interconversion of 2-phosphoglycerate and 3-phosphoglycerate. In Listeria monocytogenes serovar 1/2a (strain ATCC BAA-679 / EGD-e), this protein is 2,3-bisphosphoglycerate-dependent phosphoglycerate mutase.